Here is a 405-residue protein sequence, read N- to C-terminus: 3-isopropylmalate dehydrogenase (405 aa).

86 to 104 (GAANTVWTTPDGRTDVRPE) contributes to the NAD(+) binding site. Residues R111, R121, R148, and D237 each contribute to the substrate site. Mg(2+)-binding residues include D237, D262, and D266. 301-312 (GSAPDLGKQKVN) is a binding site for NAD(+). The segment at 352–371 (ADIGGSSSTSEVGDLLPTRS) is disordered.

Belongs to the isocitrate and isopropylmalate dehydrogenases family. As to quaternary structure, homodimer. Mg(2+) is required as a cofactor. Requires Mn(2+) as cofactor.

The protein localises to the cytoplasm. It catalyses the reaction (2R,3S)-3-isopropylmalate + NAD(+) = 4-methyl-2-oxopentanoate + CO2 + NADH. Its pathway is amino-acid biosynthesis; L-leucine biosynthesis; L-leucine from 3-methyl-2-oxobutanoate: step 3/4. In terms of biological role, catalyzes the oxidation of 3-carboxy-2-hydroxy-4-methylpentanoate (3-isopropylmalate) to 3-carboxy-4-methyl-2-oxopentanoate. The product decarboxylates to 4-methyl-2 oxopentanoate. The polypeptide is 3-isopropylmalate dehydrogenase (LEU2) (Yarrowia lipolytica (strain CLIB 122 / E 150) (Yeast)).